We begin with the raw amino-acid sequence, 142 residues long: Hemoglobin subunit beta-1 (142 aa).

The region spanning Ser-2 to His-142 is the Globin domain. Positions 59 and 88 each coordinate heme b.

Belongs to the globin family. Heterotetramer of two alpha chains and two beta chains. As to expression, red blood cells.

Its function is as follows. Involved in oxygen transport from the lung to the various peripheral tissues. In Torpedo marmorata (Marbled electric ray), this protein is Hemoglobin subunit beta-1 (HBB1).